The sequence spans 202 residues: Large ribosomal subunit protein bL25 (202 aa).

Belongs to the bacterial ribosomal protein bL25 family. CTC subfamily. As to quaternary structure, part of the 50S ribosomal subunit; part of the 5S rRNA/L5/L18/L25 subcomplex. Contacts the 5S rRNA. Binds to the 5S rRNA independently of L5 and L18.

Its function is as follows. This is one of the proteins that binds to the 5S RNA in the ribosome where it forms part of the central protuberance. In Rickettsia bellii (strain OSU 85-389), this protein is Large ribosomal subunit protein bL25.